The following is an 80-amino-acid chain: SPbeta prophage-derived thioredoxin-like protein YosR (80 aa).

The Thioredoxin domain occupies 1–80 (MRLIKLEQPN…ELDELLKELR (80 aa)). A disulfide bond links Cys11 and Cys14.

The protein belongs to the thioredoxin family.

The polypeptide is SPbeta prophage-derived thioredoxin-like protein YosR (yosR) (Bacillus subtilis (strain 168)).